Reading from the N-terminus, the 358-residue chain is UDP-N-acetylglucosamine--N-acetylmuramyl-(pentapeptide) pyrophosphoryl-undecaprenol N-acetylglucosamine transferase (358 aa).

Residues 11–13 (TGG), Asn122, Arg161, Ser189, Ile243, 262–267 (ALTVCE), and Gln288 contribute to the UDP-N-acetyl-alpha-D-glucosamine site.

The protein belongs to the glycosyltransferase 28 family. MurG subfamily.

The protein resides in the cell inner membrane. The enzyme catalyses di-trans,octa-cis-undecaprenyl diphospho-N-acetyl-alpha-D-muramoyl-L-alanyl-D-glutamyl-meso-2,6-diaminopimeloyl-D-alanyl-D-alanine + UDP-N-acetyl-alpha-D-glucosamine = di-trans,octa-cis-undecaprenyl diphospho-[N-acetyl-alpha-D-glucosaminyl-(1-&gt;4)]-N-acetyl-alpha-D-muramoyl-L-alanyl-D-glutamyl-meso-2,6-diaminopimeloyl-D-alanyl-D-alanine + UDP + H(+). It participates in cell wall biogenesis; peptidoglycan biosynthesis. Functionally, cell wall formation. Catalyzes the transfer of a GlcNAc subunit on undecaprenyl-pyrophosphoryl-MurNAc-pentapeptide (lipid intermediate I) to form undecaprenyl-pyrophosphoryl-MurNAc-(pentapeptide)GlcNAc (lipid intermediate II). The polypeptide is UDP-N-acetylglucosamine--N-acetylmuramyl-(pentapeptide) pyrophosphoryl-undecaprenol N-acetylglucosamine transferase (Coxiella burnetii (strain Dugway 5J108-111)).